Here is a 453-residue protein sequence, read N- to C-terminus: Fibrinogen gamma chain (453 aa).

A signal peptide spans 1–26 (MSWSLHPRNLILYFYALLFLSSTCVA). Ser68 is modified (phosphoserine; by FAM20C). Asn78 carries N-linked (GlcNAc...) (complex) asparagine glycosylation. In terms of domain architecture, Fibrinogen C-terminal spans 170–416 (QIHDITGKDC…KTTMKIIPFN (247 aa)). Residues Cys179 and Cys208 are joined by a disulfide bond. Asn334 is a glycosylation site (N-linked (GlcNAc...) asparagine; in variant Asahi). Residues Asp344, Asp346, Phe348, and Gly350 each coordinate Ca(2+). Cys352 and Cys365 form a disulfide bridge. The tract at residues 400-422 (TRWYSMKKTTMKIIPFNRLTIGE) is gamma-chain polymerization, binding amino end of another fibrin alpha chain. The platelet aggregation and Staphylococcus clumping stretch occupies residues 423-437 (GQQHHLGGAKQVRPE). An Isoglutamyl lysine isopeptide (Gln-Lys) (interchain with K-432) cross-link involves residue Gln424. Positions 424–453 (QQHHLGGAKQVRPEHPAETEYDSLYPEDDL) are disordered. Residue Lys432 forms an Isoglutamyl lysine isopeptide (Lys-Gln) (interchain with Q-424) linkage. A compositionally biased stretch (acidic residues) spans 442–453 (TEYDSLYPEDDL). 2 positions are modified to sulfotyrosine: Tyr444 and Tyr448.

In terms of assembly, heterohexamer; disulfide linked. Contains 2 sets of 3 non-identical chains (alpha, beta and gamma). The 2 heterotrimers are in head to head conformation with the N-termini in a small central domain. Post-translationally, conversion of fibrinogen to fibrin is triggered by thrombin, which cleaves fibrinopeptides A and B from alpha and beta chains, and thus exposes the N-terminal polymerization sites responsible for the formation of the soft clot. The soft clot is converted into the hard clot by factor XIIIA which catalyzes the epsilon-(gamma-glutamyl)lysine cross-linking between gamma chains (stronger) and between alpha chains (weaker) of different monomers. Sulfation of C-terminal tyrosines increases affinity for thrombin. As to expression, detected in blood plasma (at protein level).

Its subcellular location is the secreted. Together with fibrinogen alpha (FGA) and fibrinogen beta (FGB), polymerizes to form an insoluble fibrin matrix. Has a major function in hemostasis as one of the primary components of blood clots. In addition, functions during the early stages of wound repair to stabilize the lesion and guide cell migration during re-epithelialization. Was originally thought to be essential for platelet aggregation, based on in vitro studies using anticoagulated blood. However, subsequent studies have shown that it is not absolutely required for thrombus formation in vivo. Enhances expression of SELP in activated platelets via an ITGB3-dependent pathway. Maternal fibrinogen is essential for successful pregnancy. Fibrin deposition is also associated with infection, where it protects against IFNG-mediated hemorrhage. May also facilitate the antibacterial immune response via both innate and T-cell mediated pathways. This chain is Fibrinogen gamma chain (FGG), found in Homo sapiens (Human).